The chain runs to 363 residues: Pyrimidine monooxygenase RutA (363 aa).

Residues 49–50 (IK), asparagine 115, glutamate 124, 140–141 (RY), and serine 190 each bind FMN.

It belongs to the NtaA/SnaA/DszA monooxygenase family. RutA subfamily.

The catalysed reaction is uracil + FMNH2 + NADH + O2 = (Z)-3-ureidoacrylate + FMN + NAD(+) + H2O + H(+). It catalyses the reaction thymine + FMNH2 + NADH + O2 = (Z)-2-methylureidoacrylate + FMN + NAD(+) + H2O + H(+). Its function is as follows. Catalyzes the pyrimidine ring opening between N-3 and C-4 by an unusual flavin hydroperoxide-catalyzed mechanism, adding oxygen atoms in the process to yield ureidoacrylate peracid, that immediately reacts with FMN forming ureidoacrylate and FMN-N(5)-oxide. The FMN-N(5)-oxide reacts spontaneously with NADH to produce FMN. Requires the flavin reductase RutF to regenerate FMN in vivo. The polypeptide is Pyrimidine monooxygenase RutA (Escherichia coli O103:H2 (strain 12009 / EHEC)).